The primary structure comprises 823 residues: Nuclear factor I family protein (823 aa).

The segment at 1–56 (MEPHLKIDVSSASGSTTTGATASTSEAPQDSQAQQTMPPPSSDWSNQFNSPEAVSP) is disordered. The segment covering 10–25 (SSASGSTTTGATASTS) has biased composition (low complexity). The segment covering 26 to 52 (EAPQDSQAQQTMPPPSSDWSNQFNSPE) has biased composition (polar residues). The segment at residues 61 to 253 (IKCFSPYSQE…DVDTKITLTY (193 aa)) is a DNA-binding region (CTF/NF-I). 3 disordered regions span residues 364 to 408 (PYPI…NDEV), 433 to 468 (SRTQ…AFRS), and 777 to 823 (APPA…NEKK). Residues 386–396 (PSEKRSRDISS) are compositionally biased toward basic and acidic residues. The span at 433-447 (SRTQQNQGAPGTSRQ) shows a compositional bias: polar residues. Low complexity predominate over residues 777–794 (APPACSPSSSNSSLGAAN).

The protein belongs to the CTF/NF-I family. Expressed in muscles, neurons and intestinal cells.

The protein localises to the nucleus. Probable transcription factor which recognizes and binds the palindromic sequence 5'-TTGGCANNNTGCCAA-3' present in promoters. Plays a role in locomotion, pharyngeal pumping, egg-laying, and life span. The chain is Nuclear factor I family protein from Caenorhabditis elegans.